The primary structure comprises 358 residues: E3 ubiquitin-protein ligase RFI2 (358 aa).

Residues 1–34 (MAGAKDSGCDDDLRIAGGCDPGKRGNPEDSSSPV) form a disordered region. The RING-type; atypical zinc finger occupies 38–83 (CSICLESVLDDGTRSKAKLQCGHQFHLDCIGSAFNMKGAMQCPNCR). Disordered stretches follow at residues 174–201 (GPAA…DHFH) and 248–313 (SNQR…DQNV). Residues 187 to 201 (TDDHPWNSHSNDHFH) are compositionally biased toward basic and acidic residues. Residues 248–266 (SNQRSSPAINSYQGSSTQM) show a composition bias toward polar residues. Pro residues predominate over residues 299 to 309 (LPPPPPPPPMP).

It localises to the nucleus. The enzyme catalyses S-ubiquitinyl-[E2 ubiquitin-conjugating enzyme]-L-cysteine + [acceptor protein]-L-lysine = [E2 ubiquitin-conjugating enzyme]-L-cysteine + N(6)-ubiquitinyl-[acceptor protein]-L-lysine.. It functions in the pathway protein modification; protein ubiquitination. Functionally, mediates phytochrome (phyA and phyB)-controlled seedling deetiolation responses such as hypocotyl elongation in response to red and far-red light. Required for light-induced expression of LHCB3 and CHALCONE SYNTHASE (CHS). Negatively regulates CONSTANS (CO) and FLOWERING LOCUS T (FT) expression and photoperiodic flowering. This is E3 ubiquitin-protein ligase RFI2 from Arabidopsis thaliana (Mouse-ear cress).